The following is a 150-amino-acid chain: MRIVVQRVKHASVTNDSVDNKINKGYCLLVGVGKSSTEADIATLAKKIVNARLFEDADGKLNLNLQQVEGEILSISQFTLYADVRKGNRPGFTQSMSPDCANELYEQFNDTLRSYGINVLTGEFGTDMLVDIANDGPVTIIYESQDGKII.

A Gly-cisPro motif, important for rejection of L-amino acids motif is present at residues 136 to 137 (GP).

It belongs to the DTD family. As to quaternary structure, homodimer.

Its subcellular location is the cytoplasm. The catalysed reaction is glycyl-tRNA(Ala) + H2O = tRNA(Ala) + glycine + H(+). It carries out the reaction a D-aminoacyl-tRNA + H2O = a tRNA + a D-alpha-amino acid + H(+). In terms of biological role, an aminoacyl-tRNA editing enzyme that deacylates mischarged D-aminoacyl-tRNAs. Also deacylates mischarged glycyl-tRNA(Ala), protecting cells against glycine mischarging by AlaRS. Acts via tRNA-based rather than protein-based catalysis; rejects L-amino acids rather than detecting D-amino acids in the active site. By recycling D-aminoacyl-tRNA to D-amino acids and free tRNA molecules, this enzyme counteracts the toxicity associated with the formation of D-aminoacyl-tRNA entities in vivo and helps enforce protein L-homochirality. The sequence is that of D-aminoacyl-tRNA deacylase from Staphylococcus saprophyticus subsp. saprophyticus (strain ATCC 15305 / DSM 20229 / NCIMB 8711 / NCTC 7292 / S-41).